A 1101-amino-acid chain; its full sequence is Coiled-coil domain-containing protein 150 (1101 aa).

4 coiled-coil regions span residues 106-299 (RLES…DLTS), 398-680 (AAHA…KEDN), 712-940 (DSEI…NYEQ), and 970-1033 (VRNK…EAHR). Over residues 1055–1071 (SGEDRWQEKDQDVKHDV) the composition is skewed to basic and acidic residues. The interval 1055-1101 (SGEDRWQEKDQDVKHDVMSNQSVLHRWERKQNLRPMPKKYHSEVQRK) is disordered.

In Homo sapiens (Human), this protein is Coiled-coil domain-containing protein 150 (CCDC150).